Here is an 81-residue protein sequence, read N- to C-terminus: Sulfur carrier protein TusA (81 aa).

Catalysis depends on Cys19, which acts as the Cysteine persulfide intermediate.

This sequence belongs to the sulfur carrier protein TusA family.

The protein localises to the cytoplasm. In terms of biological role, sulfur carrier protein which probably makes part of a sulfur-relay system. This chain is Sulfur carrier protein TusA, found in Shewanella baltica (strain OS223).